A 38-amino-acid chain; its full sequence is Photosystem II reaction center protein L (38 aa).

The chain crosses the membrane as a helical span at residues 17-37 (SLYWGLLLIFVLAVLFSNYFF).

This sequence belongs to the PsbL family. As to quaternary structure, PSII is composed of 1 copy each of membrane proteins PsbA, PsbB, PsbC, PsbD, PsbE, PsbF, PsbH, PsbI, PsbJ, PsbK, PsbL, PsbM, PsbT, PsbX, PsbY, PsbZ, Psb30/Ycf12, at least 3 peripheral proteins of the oxygen-evolving complex and a large number of cofactors. It forms dimeric complexes.

It is found in the plastid. The protein localises to the chloroplast thylakoid membrane. In terms of biological role, one of the components of the core complex of photosystem II (PSII). PSII is a light-driven water:plastoquinone oxidoreductase that uses light energy to abstract electrons from H(2)O, generating O(2) and a proton gradient subsequently used for ATP formation. It consists of a core antenna complex that captures photons, and an electron transfer chain that converts photonic excitation into a charge separation. This subunit is found at the monomer-monomer interface and is required for correct PSII assembly and/or dimerization. This chain is Photosystem II reaction center protein L, found in Angiopteris evecta (Mule's foot fern).